A 396-amino-acid chain; its full sequence is ATP-dependent RNA helicase eIF4A (396 aa).

A Q motif motif is present at residues 23 to 51 (DSFDEMNLKSELLRGIYAYGFERPSAIQQ). A Helicase ATP-binding domain is found at 54–224 (IMPVIKGHDV…TKFMRDPVRI (171 aa)). 67-74 (AQSGTGKT) is a binding site for ATP. A DEAD box motif is present at residues 172-175 (DEAD). Positions 235 to 396 (GIKQFYIAVE…EMPMNVADLI (162 aa)) constitute a Helicase C-terminal domain.

It belongs to the DEAD box helicase family. eIF4A subfamily. In terms of assembly, component of the eIF4F complex, which composition varies with external and internal environmental conditions. It is composed of at least eIF4A, eIF4E and eIF4G.

Its subcellular location is the cytoplasm. The enzyme catalyses ATP + H2O = ADP + phosphate + H(+). ATP-dependent RNA helicase which is a subunit of the eIF4F complex involved in cap recognition and is required for mRNA binding to ribosome. In the current model of translation initiation, eIF4A unwinds RNA secondary structures in the 5'-UTR of mRNAs which is necessary to allow efficient binding of the small ribosomal subunit, and subsequent scanning for the initiator codon. This Pyricularia oryzae (strain 70-15 / ATCC MYA-4617 / FGSC 8958) (Rice blast fungus) protein is ATP-dependent RNA helicase eIF4A (TIF1).